We begin with the raw amino-acid sequence, 135 residues long: uncharacterized protein (135 aa).

Residues 25–123 enclose the HTH hxlR-type domain; the sequence is CPIQHVVDLL…LGSDWLEQES (99 aa).

This is an uncharacterized protein from Synechocystis sp. (strain ATCC 27184 / PCC 6803 / Kazusa).